The chain runs to 777 residues: Serine/threonine-protein kinase PTK2 (777 aa).

Positions 21-174 (NKLRGNNDST…ISSGSASSTN (154 aa)) are disordered. Low complexity predominate over residues 30-41 (TPAAAPAPVPTK). Composition is skewed to polar residues over residues 50–61 (AHISRSASTNTP) and 83–133 (RRST…SQHM). Residues 149-172 (SSVRGSSYSRHGSGSHISSGSASS) show a composition bias toward low complexity. The region spanning 222–529 (DKDNKTIGSG…MEDLFNDPWF (308 aa)) is the Protein kinase domain. ATP contacts are provided by residues 228–236 (IGSGGSSEV) and K252. The active-site Proton acceptor is D355. Disordered stretches follow at residues 564 to 705 (DAHP…EITE) and 728 to 764 (SVSG…KKVV). Polar residues-rich tracts occupy residues 575-592 (TDTN…AGTH) and 648-672 (TNTT…TNEF). Residues 677 to 694 (NATTTDNDNVNTKATTAD) show a composition bias toward low complexity. Residues 744-756 (NRSIHSNATSTGT) are compositionally biased toward polar residues.

It belongs to the protein kinase superfamily. Ser/Thr protein kinase family.

It catalyses the reaction L-seryl-[protein] + ATP = O-phospho-L-seryl-[protein] + ADP + H(+). The enzyme catalyses L-threonyl-[protein] + ATP = O-phospho-L-threonyl-[protein] + ADP + H(+). In Candida glabrata (strain ATCC 2001 / BCRC 20586 / JCM 3761 / NBRC 0622 / NRRL Y-65 / CBS 138) (Yeast), this protein is Serine/threonine-protein kinase PTK2 (PTK2).